Consider the following 159-residue polypeptide: uncharacterized protein (159 aa).

The span at 1–13 (MESRPSGRQHASE) shows a compositional bias: basic and acidic residues. The tract at residues 1-35 (MESRPSGRQHASEGDGDQSPTQCAGMRSSGRSDQP) is disordered.

This is an uncharacterized protein from Homo sapiens (Human).